A 297-amino-acid polypeptide reads, in one-letter code: 4-hydroxy-tetrahydrodipicolinate synthase (297 aa).

Position 46 (Thr-46) interacts with pyruvate. Catalysis depends on Tyr-134, which acts as the Proton donor/acceptor. Lys-162 serves as the catalytic Schiff-base intermediate with substrate. Ile-204 provides a ligand contact to pyruvate.

The protein belongs to the DapA family. As to quaternary structure, homotetramer; dimer of dimers.

The protein resides in the cytoplasm. The enzyme catalyses L-aspartate 4-semialdehyde + pyruvate = (2S,4S)-4-hydroxy-2,3,4,5-tetrahydrodipicolinate + H2O + H(+). Its pathway is amino-acid biosynthesis; L-lysine biosynthesis via DAP pathway; (S)-tetrahydrodipicolinate from L-aspartate: step 3/4. In terms of biological role, catalyzes the condensation of (S)-aspartate-beta-semialdehyde [(S)-ASA] and pyruvate to 4-hydroxy-tetrahydrodipicolinate (HTPA). This chain is 4-hydroxy-tetrahydrodipicolinate synthase, found in Stenotrophomonas maltophilia (strain R551-3).